The following is a 322-amino-acid chain: HPr kinase/phosphorylase (322 aa).

Catalysis depends on residues H142 and K163. 157–164 (GASGVGKS) is a binding site for ATP. S164 serves as a coordination point for Mg(2+). The Proton acceptor; for phosphorylation activity. Proton donor; for dephosphorylation activity role is filled by D181. The interval 205–214 (MEIRGIGIID) is important for the catalytic mechanism of both phosphorylation and dephosphorylation. E206 contacts Mg(2+). The active site involves R247. Residues 268–273 (PVKVGR) form an important for the catalytic mechanism of dephosphorylation region.

It belongs to the HPrK/P family. Homohexamer. Mg(2+) is required as a cofactor.

It catalyses the reaction [HPr protein]-L-serine + ATP = [HPr protein]-O-phospho-L-serine + ADP + H(+). The catalysed reaction is [HPr protein]-O-phospho-L-serine + phosphate + H(+) = [HPr protein]-L-serine + diphosphate. In terms of biological role, catalyzes the ATP- as well as the pyrophosphate-dependent phosphorylation of a specific serine residue in HPr, a phosphocarrier protein of the phosphoenolpyruvate-dependent sugar phosphotransferase system (PTS). HprK/P also catalyzes the pyrophosphate-producing, inorganic phosphate-dependent dephosphorylation (phosphorolysis) of seryl-phosphorylated HPr (P-Ser-HPr). The two antagonistic activities of HprK/P are regulated by several intracellular metabolites, which change their concentration in response to the absence or presence of rapidly metabolisable carbon sources (glucose, fructose, etc.) in the growth medium. Therefore, by controlling the phosphorylation state of HPr, HPrK/P is a sensor enzyme that plays a major role in the regulation of carbon metabolism and sugar transport: it mediates carbon catabolite repression (CCR), and regulates PTS-catalyzed carbohydrate uptake and inducer exclusion. This is HPr kinase/phosphorylase from Lactobacillus acidophilus (strain ATCC 700396 / NCK56 / N2 / NCFM).